A 32-amino-acid chain; its full sequence is MSDIN-like toxin proprotein 1 (32 aa).

Residues Met1–Pro10 constitute a propeptide that is removed on maturation. The segment at residues Ala11 to Pro17 is a cross-link (cyclopeptide (Ala-Pro)). Residues Cys18 to Thr32 constitute a propeptide that is removed on maturation.

This sequence belongs to the MSDIN fungal toxin family. In terms of processing, processed by the macrocyclase-peptidase enzyme POPB to yield a toxic cyclic heptapeptide. POPB first removes 10 residues from the N-terminus. Conformational trapping of the remaining peptide forces the enzyme to release this intermediate rather than proceed to macrocyclization. The enzyme rebinds the remaining peptide in a different conformation and catalyzes macrocyclization of the N-terminal 7 residues.

Its function is as follows. Probable toxin that belongs to the MSDIN-like toxin family responsible for a large number of food poisoning cases and deaths. The polypeptide is MSDIN-like toxin proprotein 1 (Amanita fuligineoides).